The primary structure comprises 223 residues: MSDRPTQGLTWGPRRDFYNESGSQKIIRKLKEEPLVPIGCILTIAAFTNAYRAMRRGDHHKVQRMFRARVAAQGFTVLAMVGGGMYYAEDRNKRKELGKLKQQQEAEEKRQKWIRELEARDEEEKALQEMMDKKRKRASERTMRAETGSEGIAAQARAAFKDKANKGEAAGAEKTEAPSQRADNEKKPAGSGFLGGWFGGSSKTPETPAKDTKGKNLDSESSS.

In terms of domain architecture, HIG1 spans 7 to 98 (QGLTWGPRRD…EDRNKRKELG (92 aa)). 2 consecutive transmembrane segments (helical) span residues 34–53 (PLVPIGCILTIAAFTNAYRA) and 66–88 (FRARVAAQGFTVLAMVGGGMYYA). Positions 87–139 (YAEDRNKRKELGKLKQQQEAEEKRQKWIRELEARDEEEKALQEMMDKKRKRAS) form a coiled coil. 3 stretches are compositionally biased toward basic and acidic residues: residues 121 to 132 (DEEEKALQEMMD), 159 to 188 (AFKDKANKGEAAGAEKTEAPSQRADNEKKP), and 208 to 223 (PAKDTKGKNLDSESSS). A disordered region spans residues 121 to 223 (DEEEKALQEM…GKNLDSESSS (103 aa)).

The protein belongs to the RCF1 family. As to quaternary structure, associates with the respiratory chain complex III/complex IV supercomplex.

It localises to the mitochondrion membrane. Functionally, cytochrome c oxidase subunit which plays a role in assembly of respiratory supercomplexes. This is Respiratory supercomplex factor 1, mitochondrial (RCF1) from Chaetomium globosum (strain ATCC 6205 / CBS 148.51 / DSM 1962 / NBRC 6347 / NRRL 1970) (Soil fungus).